Here is a 163-residue protein sequence, read N- to C-terminus: Nucleotide-binding protein PM1656 (163 aa).

The protein belongs to the YajQ family.

Functionally, nucleotide-binding protein. The protein is Nucleotide-binding protein PM1656 of Pasteurella multocida (strain Pm70).